A 385-amino-acid polypeptide reads, in one-letter code: Glucans biosynthesis protein C (385 aa).

The next 10 helical transmembrane spans lie at 17–37 (AWLMLLGIPFHISLIYSSHTW), 60–80 (MQVFFVISGYFSYMLFLRYPL), 91–111 (VGIPMLTAIPLLTLPQFIMLQ), 137–157 (ISHLWFLLVLVVMTTLCVWIF), 173–193 (KFSMVKLSVIFLCLGIGYAVI), 212–232 (FIVMQTLFYLPFFILGALAFI), 245–262 (RGSTLAAALAFVAYLLNQ), 274–294 (TESVITMVLGLWMVNVVFSFG), 311–331 (ASLFIYLVHHPLTLFFGAYIT), and 338–358 (WLGFLCGLIFVVGIAIILYEI).

Belongs to the acyltransferase 3 family. OpgC subfamily.

It localises to the cell membrane. It participates in glycan metabolism; osmoregulated periplasmic glucan (OPG) biosynthesis. In terms of biological role, necessary for the succinyl substitution of periplasmic glucans. Could catalyze the transfer of succinyl residues from the cytoplasmic side of the membrane to the nascent glucan backbones on the periplasmic side of the membrane. This chain is Glucans biosynthesis protein C, found in Escherichia coli O81 (strain ED1a).